Consider the following 238-residue polypeptide: Sugar fermentation stimulation protein homolog (238 aa).

The protein belongs to the SfsA family.

This Brucella melitensis biotype 1 (strain ATCC 23456 / CCUG 17765 / NCTC 10094 / 16M) protein is Sugar fermentation stimulation protein homolog.